A 749-amino-acid chain; its full sequence is 5-methyltetrahydropteroyltriglutamate--homocysteine methyltransferase (749 aa).

Residues 15 to 18 and Lys114 contribute to the 5-methyltetrahydropteroyltri-L-glutamate site; that span reads RELK. L-homocysteine is bound by residues 425 to 427 and Glu478; that span reads IGS. L-methionine contacts are provided by residues 425–427 and Glu478; that span reads IGS. Trp555 serves as a coordination point for 5-methyltetrahydropteroyltri-L-glutamate. Asp593 serves as a coordination point for L-homocysteine. Asp593 is an L-methionine binding site. Glu599 lines the 5-methyltetrahydropteroyltri-L-glutamate pocket. Residues His636, Cys638, and Glu660 each contribute to the Zn(2+) site. The active-site Proton donor is His689. Position 721 (Cys721) interacts with Zn(2+).

The protein belongs to the vitamin-B12 independent methionine synthase family. Zn(2+) is required as a cofactor.

It carries out the reaction 5-methyltetrahydropteroyltri-L-glutamate + L-homocysteine = tetrahydropteroyltri-L-glutamate + L-methionine. It participates in amino-acid biosynthesis; L-methionine biosynthesis via de novo pathway; L-methionine from L-homocysteine (MetE route): step 1/1. Catalyzes the transfer of a methyl group from 5-methyltetrahydrofolate to homocysteine resulting in methionine formation. The polypeptide is 5-methyltetrahydropteroyltriglutamate--homocysteine methyltransferase (Streptococcus pneumoniae serotype 19F (strain G54)).